Reading from the N-terminus, the 458-residue chain is Protein adenylyltransferase FICD (458 aa).

The Cytoplasmic portion of the chain corresponds to 1–23; it reads MILMPMASVVAVAEPKWVSVWGR. A helical; Signal-anchor for type II membrane protein membrane pass occupies residues 24–44; that stretch reads FLWMTLLSMALGSLLALLLPL. Topologically, residues 45–458 are lumenal; the sequence is GAVEEQCLAV…GFKETLPVRP (414 aa). S79 carries the post-translational modification O-AMP-serine; by autocatalysis. T80 is modified (O-AMP-threonine; by autocatalysis). TPR repeat units follow at residues 106-139 and 140-173; these read AKAA…DPGF and VDAL…SPFH. O-AMP-threonine; by autocatalysis is present on T183. The Inhibitory (S/T)XXXE(G/N) motif motif lies at 230 to 235; that stretch reads TVAIEG. E234 provides a ligand contact to ATP. Residue N275 is glycosylated (N-linked (GlcNAc...) asparagine). Residues 285 to 420 enclose the Fido domain; the sequence is VTIDHMLEIH…VRPFIRFIAK (136 aa). 316 to 319 is an ATP binding site; it reads VGHH. Residue H363 is part of the active site. ATP-binding positions include 367–374, 399–400, and N407; these read DGNGRTSR and YY.

The protein belongs to the fic family. In terms of assembly, homodimer. Interacts with HD. It depends on Mg(2+) as a cofactor. Mn(2+) is required as a cofactor. Post-translationally, auto-AMPylated in vitro.

The protein localises to the endoplasmic reticulum membrane. The catalysed reaction is L-tyrosyl-[protein] + ATP = O-(5'-adenylyl)-L-tyrosyl-[protein] + diphosphate. The enzyme catalyses 3-O-(5'-adenylyl)-L-threonyl-[protein] + H2O = L-threonyl-[protein] + AMP + H(+). It carries out the reaction L-threonyl-[protein] + ATP = 3-O-(5'-adenylyl)-L-threonyl-[protein] + diphosphate. Its activity is regulated as follows. The side chain of Glu-234 determines which of the two opposing activities (AMPylase or de-AMPylase) will take place. In response to endoplasmic reticulum stress, mediates de-AMPylase activity. Adenylyltransferase activity is inhibited by the inhibitory helix present at the N-terminus: Glu-234 binds ATP and competes with ATP-binding at Arg-374, thereby preventing adenylyltransferase activity. In unstressed cells, disengagement of Glu-234 promotes adenylyltransferase activity. Activation dissociates ATP-binding from Glu-234, allowing ordered binding of the entire ATP moiety with the alpha-phosphate in an orientation that is productive for accepting an incoming target hydroxyl side chain. Functionally, protein that can both mediate the addition of adenosine 5'-monophosphate (AMP) to specific residues of target proteins (AMPylation), and the removal of the same modification from target proteins (de-AMPylation), depending on the context. The side chain of Glu-231 determines which of the two opposing activities (AMPylase or de-AMPylase) will take place. Acts as a key regulator of the ERN1/IRE1-mediated unfolded protein response (UPR) by mediating AMPylation or de-AMPylation of HSPA5/BiP. In unstressed cells, acts as an adenylyltransferase by mediating AMPylation of HSPA5/BiP at 'Thr-518', thereby inactivating it. In response to endoplasmic reticulum stress, acts as a phosphodiesterase by mediating removal of ATP (de-AMPylation) from HSPA5/BiP at 'Thr-518', leading to restore HSPA5/BiP activity. Although it is able to AMPylate RhoA, Rac and Cdc42 Rho GTPases in vitro, Rho GTPases do not constitute physiological substrates. The chain is Protein adenylyltransferase FICD from Rattus norvegicus (Rat).